Reading from the N-terminus, the 235-residue chain is Orotidine 5'-phosphate decarboxylase (235 aa).

Substrate-binding positions include Asp-17, Lys-39, 66-75 (DLKLHDIGNT), Thr-121, Arg-182, Gln-191, Gly-211, and Arg-212. The active-site Proton donor is the Lys-68.

This sequence belongs to the OMP decarboxylase family. Type 1 subfamily. In terms of assembly, homodimer.

It carries out the reaction orotidine 5'-phosphate + H(+) = UMP + CO2. Its pathway is pyrimidine metabolism; UMP biosynthesis via de novo pathway; UMP from orotate: step 2/2. Functionally, catalyzes the decarboxylation of orotidine 5'-monophosphate (OMP) to uridine 5'-monophosphate (UMP). This is Orotidine 5'-phosphate decarboxylase from Rhodopseudomonas palustris (strain BisB5).